Reading from the N-terminus, the 207-residue chain is Transcription factor DYT1 (207 aa).

Residues 1–38 (MGGGSRFQEPVRMSRRKQVTKEKEEDENFKSPNLEAER) are disordered. Positions 28 to 77 (NFKSPNLEAERRRREKLHCRLMALRSHVPIVTNMTKASIVEDAITYIGEL) constitute a bHLH domain.

Homodimer. In terms of tissue distribution, mostly expressed in anthers, and, to a lower extent, in young inflorescences undergoing meiosis and siliques.

The protein localises to the nucleus. Functionally, transcription factor. Involved in the control of tapetum development. Required for male fertility and pollen differentiation, especially during callose deposition. This is Transcription factor DYT1 from Arabidopsis thaliana (Mouse-ear cress).